The following is a 254-amino-acid chain: tRNA 2'-phosphotransferase 1 (254 aa).

Met1 carries the post-translational modification N-acetylmethionine. Disordered stretches follow at residues 1 to 30 (MNSF…DRDV) and 225 to 254 (RKPL…MTQQ). Residues 233-244 (NEEKEHQRDSKH) are compositionally biased toward basic and acidic residues.

Belongs to the KptA/TPT1 family.

The enzyme catalyses 2'-phospho-[ligated tRNA] + NAD(+) = mature tRNA + ADP-alpha-D-ribose 1'',2''-cyclic phosphate + nicotinamide. Its function is as follows. Catalyzes the last step of tRNA splicing, the transfer of the splice junction 2'-phosphate from ligated tRNA to NAD to produce ADP-ribose 1''-2'' cyclic phosphate. This chain is tRNA 2'-phosphotransferase 1 (TRPT1), found in Bos taurus (Bovine).